The chain runs to 350 residues: tRNA uridine(34) hydroxylase (350 aa).

One can recognise a Rhodanese domain in the interval 146–240; sequence DDPDALFIDM…YARKAREQGL (95 aa). Cys-200 functions as the Cysteine persulfide intermediate in the catalytic mechanism.

Belongs to the TrhO family.

The enzyme catalyses uridine(34) in tRNA + AH2 + O2 = 5-hydroxyuridine(34) in tRNA + A + H2O. Functionally, catalyzes oxygen-dependent 5-hydroxyuridine (ho5U) modification at position 34 in tRNAs. The chain is tRNA uridine(34) hydroxylase from Shigella flexneri serotype 5b (strain 8401).